We begin with the raw amino-acid sequence, 238 residues long: Probable 2-phosphosulfolactate phosphatase (238 aa).

This sequence belongs to the ComB family. It depends on Mg(2+) as a cofactor.

The enzyme catalyses (2R)-O-phospho-3-sulfolactate + H2O = (2R)-3-sulfolactate + phosphate. This Clostridium botulinum (strain Alaska E43 / Type E3) protein is Probable 2-phosphosulfolactate phosphatase.